The primary structure comprises 466 residues: Zinc finger protein NUTCRACKER (466 aa).

Polar residues predominate over residues 1–23 (MTSEVLQTISSGSGFAQPQSSST). A disordered region spans residues 1-29 (MTSEVLQTISSGSGFAQPQSSSTLDHDES). The residue at position 56 (S56) is a Phosphoserine. Residues 66 to 88 (FLCEVCGKGFQRDQNLQLHRRGH) form a C2H2-type 1 zinc finger. The residue at position 98 (T98) is a Phosphothreonine; by KIN10. A C2H2-type 2 zinc finger spans residues 107–137 (YVCPEKTCVHHHSSRALGDLTGIKKHFCRKH). The short motif at 134 to 141 (CRKHGEKK) is the Nuclear localization signal element. A C2H2-type 2; degenerate zinc finger spans residues 142–165 (WTCEKCAKRYAVQSDWKAHSKTCG). Zn(2+) is bound by residues C144, C147, H160, C164, C171, and C173. The segment at 169 to 192 (YRCDCGTIFSRRDSFITHRAFCDA) adopts a CCHC-type 2; atypical zinc-finger fold. Phosphoserine; by KIN10 is present on residues S178 and S182. The tract at residues 179–191 (RRDSFITHRAFCD) is SHR-binding. Zn(2+) is bound by residues H186 and C190.

Interacts with AKIN10. Post-translationally, inhibition of transcription factor activity by KIN10-mediated phosphorylation at Thr-98, Ser-178 and Ser-182 under sugar deprivation conditions, thus delaying flowering. As to expression, highly expressed in vegetative organs and at lower levels in flowers and siliques. Expressed predominantly in roots. In roots, present in cortex, endodermis, and pericycle layer.

It localises to the nucleus. Transcription activator that binds to the DNA sequence 5'-CTTTTGTCC-3'. Regulates photoperiodic flowering by modulating sugar transport and metabolism. Regulates SUS1 and SUS4. Transcription factor that regulates tissue boundaries and asymmetric cell division. Contributes to the sequestration of 'SHORT-ROOT' to the nucleus. The chain is Zinc finger protein NUTCRACKER from Arabidopsis thaliana (Mouse-ear cress).